The following is a 497-amino-acid chain: Acetyl-coenzyme A carboxylase carboxyl transferase subunit beta, chloroplastic (497 aa).

A CoA carboxyltransferase N-terminal domain is found at 230-497; that stretch reads LWVQCENCYG…FFPVNSNSIK (268 aa). Zn(2+) contacts are provided by Cys-234, Cys-237, Cys-253, and Cys-256. The segment at 234-256 adopts a C4-type zinc-finger fold; that stretch reads CENCYGLNYKKFFRSKFNICEQC.

Belongs to the AccD/PCCB family. In terms of assembly, acetyl-CoA carboxylase is a heterohexamer composed of biotin carboxyl carrier protein, biotin carboxylase and 2 subunits each of ACCase subunit alpha and ACCase plastid-coded subunit beta (accD). It depends on Zn(2+) as a cofactor.

It is found in the plastid. The protein resides in the chloroplast stroma. It catalyses the reaction N(6)-carboxybiotinyl-L-lysyl-[protein] + acetyl-CoA = N(6)-biotinyl-L-lysyl-[protein] + malonyl-CoA. It participates in lipid metabolism; malonyl-CoA biosynthesis; malonyl-CoA from acetyl-CoA: step 1/1. Component of the acetyl coenzyme A carboxylase (ACC) complex. Biotin carboxylase (BC) catalyzes the carboxylation of biotin on its carrier protein (BCCP) and then the CO(2) group is transferred by the transcarboxylase to acetyl-CoA to form malonyl-CoA. In Nandina domestica (Heavenly bamboo), this protein is Acetyl-coenzyme A carboxylase carboxyl transferase subunit beta, chloroplastic.